We begin with the raw amino-acid sequence, 225 residues long: MMYPIPGVLSPQDVARFREQLEQAEWVDGRVTTGAQGAQVKNNQQVDTRSTLYAALQNEVLNAVNQHALFFAAALPRTLSTPLFNRYQNNETYGFHVDGAVRSHPQNGWMRTDLSATLFLSDPQSYDGGELVVNDTFGQHRVKLPAGDLVLYPSSSLHCVTPVTRGVRVASFMWIQSMIRDDKKRAMLFELDNNIQSLKSRYGENEEILSLLNLYHNLLREWSEI.

The Fe2OG dioxygenase domain maps to 78–177 (TLSTPLFNRY…RVASFMWIQS (100 aa)). The Fe cation site is built by His-96, Asp-98, and His-158. Arg-168 provides a ligand contact to 2-oxoglutarate.

Requires Fe(2+) as cofactor. L-ascorbate is required as a cofactor.

This chain is PKHD-type hydroxylase YbiX, found in Escherichia coli O8 (strain IAI1).